The chain runs to 156 residues: ATP synthase subunit b (156 aa).

Residues 12 to 32 traverse the membrane as a helical segment; sequence LAFAIFVWFCMKLVWPPITAA.

The protein belongs to the ATPase B chain family. F-type ATPases have 2 components, F(1) - the catalytic core - and F(0) - the membrane proton channel. F(1) has five subunits: alpha(3), beta(3), gamma(1), delta(1), epsilon(1). F(0) has three main subunits: a(1), b(2) and c(10-14). The alpha and beta chains form an alternating ring which encloses part of the gamma chain. F(1) is attached to F(0) by a central stalk formed by the gamma and epsilon chains, while a peripheral stalk is formed by the delta and b chains.

It is found in the cell inner membrane. Functionally, f(1)F(0) ATP synthase produces ATP from ADP in the presence of a proton or sodium gradient. F-type ATPases consist of two structural domains, F(1) containing the extramembraneous catalytic core and F(0) containing the membrane proton channel, linked together by a central stalk and a peripheral stalk. During catalysis, ATP synthesis in the catalytic domain of F(1) is coupled via a rotary mechanism of the central stalk subunits to proton translocation. Component of the F(0) channel, it forms part of the peripheral stalk, linking F(1) to F(0). This Stutzerimonas stutzeri (strain A1501) (Pseudomonas stutzeri) protein is ATP synthase subunit b.